The primary structure comprises 61 residues: Probable tautomerase lin2709 (61 aa).

P2 functions as the Proton acceptor; via imino nitrogen in the catalytic mechanism.

This sequence belongs to the 4-oxalocrotonate tautomerase family.

The chain is Probable tautomerase lin2709 from Listeria innocua serovar 6a (strain ATCC BAA-680 / CLIP 11262).